The following is a 450-amino-acid chain: Benzene 1,2-dioxygenase subunit alpha (450 aa).

The 110-residue stretch at 54-163 folds into the Rieske domain; sequence WLLLGHETQI…VETYKGLIFA (110 aa). 4 residues coordinate [2Fe-2S] cluster: Cys-96, His-98, Cys-116, and His-119. The Fe cation site is built by His-222 and His-228.

This sequence belongs to the bacterial ring-hydroxylating dioxygenase alpha subunit family. As to quaternary structure, this dioxygenase system consists of four proteins: the two subunits of the hydroxylase component (BnzA and BnzB), a ferredoxin (BnzC) and a ferredoxin reductase (BnzD). [2Fe-2S] cluster is required as a cofactor. Fe cation serves as cofactor.

The catalysed reaction is benzene + NADH + O2 + H(+) = cis-1,2-dihydrobenzene-1,2-diol + NAD(+). It carries out the reaction toluene + NADH + O2 + H(+) = (1S,2R)-3-methylcyclohexa-3,5-diene-1,2-diol + NAD(+). It functions in the pathway aromatic compound metabolism; benzene degradation; catechol from benzene: step 1/2. Its pathway is xenobiotic degradation; toluene degradation. The protein operates within xenobiotic degradation; xylene degradation. Its function is as follows. Catalyzes both the oxidation of benzene and toluene. This is Benzene 1,2-dioxygenase subunit alpha (bnzA) from Pseudomonas putida (strain ATCC 700007 / DSM 6899 / JCM 31910 / BCRC 17059 / LMG 24140 / F1).